The sequence spans 595 residues: Cardiolipin synthase (CMP-forming) / mitochondrial hydrolase fusion protein (595 aa).

The transit peptide at 1–24 (MLHTINYRSWHLAARQLGRSTFRK) directs the protein to the mitochondrion. 2 helical membrane passes run 538-560 (ALQL…ASFA) and 564-586 (LFYI…RNTF).

In the N-terminal section; belongs to the HAD-like hydrolase superfamily. It in the C-terminal section; belongs to the CDP-alcohol phosphatidyltransferase class-I family. It depends on Mg(2+) as a cofactor. Proteolytically cleaved, presumably during its import into the mitochondrion by mitochondrial processing peptidase.

The protein localises to the mitochondrion. It is found in the mitochondrion inner membrane. It catalyses the reaction a CDP-1,2-diacyl-sn-glycerol + a 1,2-diacyl-sn-glycero-3-phospho-(1'-sn-glycerol) = a cardiolipin + CMP + H(+). Its function is as follows. Catalyzes the synthesis of cardiolipin (CL) (diphosphatidylglycerol) by specifically transferring a phosphatidyl group from CDP-diacylglycerol to phosphatidylglycerol (PG). CL is a key phospholipid in mitochondrial membranes and plays important roles in maintaining the functional integrity and dynamics of mitochondria under both optimal and stress conditions. In terms of biological role, activity is dispensable for viability. The sequence is that of Cardiolipin synthase (CMP-forming) / mitochondrial hydrolase fusion protein from Schizosaccharomyces pombe (strain 972 / ATCC 24843) (Fission yeast).